Here is a 457-residue protein sequence, read N- to C-terminus: Multidrug resistance protein MdtK (457 aa).

The next 12 membrane-spanning stretches (helical) occupy residues Leu11–Val31, Ile53–Ala73, Trp93–Ile113, Ala127–Ala147, Gly160–Tyr180, Leu188–Met208, Leu243–Val263, Ile276–Thr296, Ala314–Val334, Leu357–Ile377, Ile387–Ala407, and Pro418–Leu438.

It belongs to the multi antimicrobial extrusion (MATE) (TC 2.A.66.1) family. MdtK subfamily.

Its subcellular location is the cell inner membrane. In terms of biological role, multidrug efflux pump that functions probably as a Na(+)/drug antiporter. This is Multidrug resistance protein MdtK from Salmonella arizonae (strain ATCC BAA-731 / CDC346-86 / RSK2980).